A 165-amino-acid polypeptide reads, in one-letter code: MAILEIKKYPDEVLKKKAETISEINGDLQKLIDNMIETMYNANGIGLAAPQVGVLKRLIVVDTSPREQNQSLIVLINPEITDSEGEILSEEGCLSLPGFTTRLKRKERVIVKGLDRNGKEIEIEATGLLARALQHEIDHLDGILLIDKISPLKRELFRKKFKTKK.

Fe cation contacts are provided by Cys93 and His135. Glu136 is a catalytic residue. His139 serves as a coordination point for Fe cation.

It belongs to the polypeptide deformylase family. Fe(2+) is required as a cofactor.

It carries out the reaction N-terminal N-formyl-L-methionyl-[peptide] + H2O = N-terminal L-methionyl-[peptide] + formate. In terms of biological role, removes the formyl group from the N-terminal Met of newly synthesized proteins. Requires at least a dipeptide for an efficient rate of reaction. N-terminal L-methionine is a prerequisite for activity but the enzyme has broad specificity at other positions. This Thermodesulfovibrio yellowstonii (strain ATCC 51303 / DSM 11347 / YP87) protein is Peptide deformylase.